The chain runs to 493 residues: Cysteine--tRNA ligase (493 aa).

Cysteine 29 serves as a coordination point for Zn(2+). The 'HIGH' region signature appears at 31-41; the sequence is VTVYDYCHIGH. Residues cysteine 209, histidine 234, and glutamate 238 each coordinate Zn(2+). A 'KMSKS' region motif is present at residues 266 to 270; that stretch reads KMSKS. Lysine 269 lines the ATP pocket.

Belongs to the class-I aminoacyl-tRNA synthetase family. As to quaternary structure, monomer. Zn(2+) is required as a cofactor.

Its subcellular location is the cytoplasm. It carries out the reaction tRNA(Cys) + L-cysteine + ATP = L-cysteinyl-tRNA(Cys) + AMP + diphosphate. The protein is Cysteine--tRNA ligase of Pelobacter propionicus (strain DSM 2379 / NBRC 103807 / OttBd1).